The primary structure comprises 343 residues: UDP-3-O-acylglucosamine N-acyltransferase (343 aa).

The active-site Proton acceptor is the His248.

Belongs to the transferase hexapeptide repeat family. LpxD subfamily. Homotrimer.

The enzyme catalyses a UDP-3-O-[(3R)-3-hydroxyacyl]-alpha-D-glucosamine + a (3R)-hydroxyacyl-[ACP] = a UDP-2-N,3-O-bis[(3R)-3-hydroxyacyl]-alpha-D-glucosamine + holo-[ACP] + H(+). The protein operates within bacterial outer membrane biogenesis; LPS lipid A biosynthesis. Catalyzes the N-acylation of UDP-3-O-acylglucosamine using 3-hydroxyacyl-ACP as the acyl donor. Is involved in the biosynthesis of lipid A, a phosphorylated glycolipid that anchors the lipopolysaccharide to the outer membrane of the cell. In Microcystis aeruginosa (strain NIES-843 / IAM M-2473), this protein is UDP-3-O-acylglucosamine N-acyltransferase.